Here is a 626-residue protein sequence, read N- to C-terminus: Ankyrin repeat domain-containing protein 55 (626 aa).

9 ANK repeats span residues 25–54 (VDLAMVYQAASNGDVNSLTSVIREDPSILE), 59–88 (EGCTPLMHAVSGRQVDTVKLLLKMGANINT), 92–124 (YGRTSLCLATYLGWLEGCVSLLRNGAKHNIPDK), 125–156 (NGRLPLHAATAEPDVRLLIVLLQQSSLSEINH), 160–189 (EGMTPLHWAAFHNRPQHTQMLLKKGADPTL), 193–222 (DFKTALHWAVQSGNRILCSIILSHRQGPSI), 229–259 (SGKTCVHIAAASGFGDIINDLAKVPECNLQA), 263–292 (DDRTPLHWAAASGKAECVQSLLDLGMDSNL), and 296–325 (NESTPLAYALYCGHTACVRLLSREGRAEPA). Residues 354 to 372 (KEEQKAHQKDQSRARPKEE) are compositionally biased toward basic and acidic residues. Disordered regions lie at residues 354 to 377 (KEEQKAHQKDQSRARPKEEETSEV), 455 to 491 (HAGLNAGPQHTAQRSQKSRSEQDLLNNRTGCPVSLEN), and 522 to 626 (QPGH…HDEN). The residue at position 474 (Ser474) is a Phosphoserine. The segment covering 604–614 (QRGHDPPRAEE) has biased composition (basic and acidic residues). Residues 616-626 (GGSSSPTHDEN) show a composition bias toward polar residues.

The sequence is that of Ankyrin repeat domain-containing protein 55 (Ankrd55) from Mus musculus (Mouse).